The sequence spans 1077 residues: MPMFMDGASQVLQQVLQTVLVTSEPAIVIPGSFLGELDVIVDEAKNHGMKLVSIPKGGITILPPIPMSESSLTRLCKDYYGLKTDAERLALFSNLEETFPTAPGVSLPCRLLYHPRDYICRIVHLCAELVTASDEEYQKAYDIVPLLHIRPVQNVCEELRRQFRAGALTQRLPLGQRVDVQFKRTVVHLDGSMDPFPRNAAEAAVNIAPVALDAVDDIYEGFDVTGTEVVDIPTGKVSEYLSEKDFELVTEDSVLLDPTGKRVQAIFIRGGIDKDICRRAAADVEGVATKQNMRRLTNGGVRNPDTGILGYYDYLNNPTKRKCRMTEFTRRNWGKIIGPCGELLQLLDQLYKENAPDHYELQRRVIPPEYMLFNTVFSTVSVNKNFRTAVHRDKGDFRGGLTALCVLDGNYEGCYLALKSARKAFCLQVGDVLFFDSSLEHGNTEVHNREGSWRRISIVCYLRCGLMSHTCETERSMRLRNQIMSDRLHADSADSVVNLNGVTGHLPPLCIPFKIAKTLSLTQHAALRFVSRRIKEGDGCVLALTMGLGKTLVSLTICYSYIYNNGPCDILIVAPKTLLQHWMQEAKKWKDYGLVFPGFIVLNNVDSSSFEDDLSNYEQQGTTTNPKKSYVFVINPGYIKSFLSRVKGFRPALIVVDEGHCISSKESKLREVLDSLYCSARVVLTGTPVQNNAEELYRLVGWVDDKVHSTLPQRDFNEFSNSINRYVNGDDSAFCDALFAQRYIHEWMSPYVFTVMKVDLPPLHDYIIICNFSAVQQKMFEERIKVDATDNLLCLKASEHRPYHLSTHPLCFLGFLTGIWRTGQVDIEEEPGEFEELGTYRLSRDDDALAKDCSSLLENGKLADFVALSGKLTALISILHSIFEKMEKAVIFSQYIGSQDFIARTLTAYKISVVTIRGKDCQQRRRRVVEMFRDDKNVLCLVVSTQIGAYGLDLTAANHVILWDTWWNPQVESQAIARCYRQNQSKAVIAYKLASGFEDATVLKAQARKRALFKCLINEETSQVVPGHDLVDYTSSEEDDDRRHLWETLKTCTLEGGKPAVTKIIRNIDTVKSERWI.

Positions 1–516 (MPMFMDGASQ…PPLCIPFKIA (516 aa)) are thymine dioxygenase. Fe cation-binding residues include histidine 391, aspartate 393, and histidine 441. Residue arginine 455 coordinates 2-oxoglutarate. The interval 517-1075 (KTLSLTQHAA…RNIDTVKSER (559 aa)) is DNA Helicase. A Helicase ATP-binding domain is found at 531–706 (SRRIKEGDGC…YRLVGWVDDK (176 aa)). 544–551 (LTMGLGKT) serves as a coordination point for ATP. The short motif at 657-660 (DEGH) is the DEAH box element. The 162-residue stretch at 871 to 1032 (KLTALISILH…QVVPGHDLVD (162 aa)) folds into the Helicase C-terminal domain.

This sequence in the C-terminal section; belongs to the SNF2/RAD54 helicase family. It in the N-terminal section; belongs to the TET family. JBP2 subfamily. The cofactor is Fe(2+).

Its subcellular location is the nucleus. The enzyme catalyses ATP + H2O = ADP + phosphate + H(+). It carries out the reaction thymine + 2-oxoglutarate + O2 = 5-hydroxymethyluracil + succinate + CO2. Its function is as follows. Dioxygenase that catalyzes the first step of DNA base J (beta-d-glucosyl-HOMedU) biosynthesis by converting thymine to 5-hydroxymethyluracil (HOMedU). DNA base J is a hypermodified thymidine residue found in the genome of kinetoplastid parasites, which is localized primarily to repetitive DNA, namely the telomeres, and is implicated in the regulation of antigenic variation. Probably also acts as a DNA helicase. Recognizes and binds specific regions of the genome, hydrolyzes ATP and allows the DNA base J de novo synthesis. Involved in initial synthesis of DNA base J, JBP1 being able to act via the basal level of DNA base J and propagate further synthesis. In contrast to JBP1, it does not specifically bind DNA base J, however it binds chromatin. This chain is Bifunctional helicase and thymine dioxygenase JBP2 (JBP2), found in Trypanosoma brucei brucei (strain 927/4 GUTat10.1).